The primary structure comprises 132 residues: AP-2 complex subunit sigma (132 aa).

It belongs to the adaptor complexes small subunit family. In terms of assembly, adaptor protein complex 2 (AP-2) is a heterotetramer composed of two large adaptins (alpha-type and beta-type subunits), a medium adaptin (mu-type subunit AP50) and a small adaptin (sigma-type subunit AP17). In terms of tissue distribution, widely expressed in the embryo, endosperm, leaf and root.

Its subcellular location is the cell membrane. The protein resides in the membrane. It is found in the coated pit. Component of the adaptor complexes which link clathrin to receptors in coated vesicles. Clathrin-associated protein complexes are believed to interact with the cytoplasmic tails of membrane proteins, leading to their selection and concentration. AP2S1/AP17 is a subunit of the plasma membrane adaptor. The complex binds polyphosphoinositides. The polypeptide is AP-2 complex subunit sigma (AP-17) (Zea mays (Maize)).